The chain runs to 591 residues: DEAD-box ATP-dependent RNA helicase 30 (591 aa).

The disordered stretch occupies residues 1-109 (MSSYDRRFAD…GRGGSSKREL (109 aa)). Gly residues predominate over residues 72-103 (FSVGRGGGRGGYGQYGDRNGGGNWGGGGGRGG). The short motif at 165–193 (KMFQDANFPDNILEAIAKLGFTEPTPIQA) is the Q motif element. The Helicase ATP-binding domain maps to 196–371 (WPMALKGRDL…RQFLRDPYKA (176 aa)). ATP is bound at residue 209–216 (AETGSGKT). The DEAD box motif lies at 319–322 (DEAD). Residues 399-544 (RLLTLLKQLM…VVPPTLSALV (146 aa)) form the Helicase C-terminal domain. The segment at 547 to 591 (SGSGYGGSGGGRNFRPRGGGRGGGFGDKRSRSTSNFVPHGGKRTW) is disordered. Gly residues predominate over residues 549 to 571 (SGYGGSGGGRNFRPRGGGRGGGF).

It belongs to the DEAD box helicase family. DDX5/DBP2 subfamily.

The protein resides in the nucleus. It carries out the reaction ATP + H2O = ADP + phosphate + H(+). Functionally, ATP-dependent RNA helicase involved nonsense-mediated mRNA decay and ribosome biogenesis through rRNA processing. This chain is DEAD-box ATP-dependent RNA helicase 30 (RH30), found in Arabidopsis thaliana (Mouse-ear cress).